Reading from the N-terminus, the 282-residue chain is MILVTGATGAVGREVAGRLADAGPVRILARRPERLTVRGTGVEVVQGAYGDRAALDRALRGVDAVFLVTNDPTEPDDERVAAAAAAAGVRHLVKLSMMAVEEPDAEDFITRRQRENEQAVRDSGVPWTFVRPRTFMSNTLSWAPGIRSAGVVRALYGDAPVACVDPRDVAAVAVAALTGTGHEGRAYAVSGPEAITAREQTAQLSRVLGRPLRFEELGVDAARTALMAKYPPPVAEAFLQSAERQRTGAKASVVPTVQELTGRPARPFRDWSAEHAEAFAPE.

6–11 is a binding site for NADP(+); it reads GATGAV.

Belongs to the NmrA-type oxidoreductase family.

The enzyme catalyses a [(3S,4R)-4-alkanoyl-5-oxooxolan-3-yl]methyl phosphate + NADP(+) = a (4-alkanoyl-5-oxo-2,5-dihydrofuran-3-yl)methyl phosphate + NADPH + H(+). It carries out the reaction [(3S,4R)-4-(6-methylheptanoyl)-5-oxooxolan-3-yl]methyl phosphate + NADP(+) = [4-(6-methylheptanoyl)-5-oxo-2H-furan-3-yl]methyl phosphate + NADPH + H(+). Involved in the biosynthesis of A factor (2-isocapryloyl-3R-hydroxymethyl-gamma-butyrolactone), a gamma-butyrolactone autoregulator that triggers secondary metabolism and morphogenesis in Streptomyces. Catalyzes the reduction of the butenolide phosphate produced by nonenzymatic intramolecular condensation of the 8-methyl-3-oxononanoyl-DHAP ester. This Streptomyces griseus subsp. griseus (strain JCM 4626 / CBS 651.72 / NBRC 13350 / KCC S-0626 / ISP 5235) protein is (4-alkanoyl-5-oxo-2,5-dihydrofuran-3-yl)methyl phosphate reductase.